We begin with the raw amino-acid sequence, 482 residues long: MVGSVGNGLVDLGGAAVAVNGVGKGMRPEAVAVAMEVESPPRPAEEEGEGSPTRREIVLGRNVHTASFAVKEPDADDEETGEREAAMASVLALYRRNLVERTKHHLGYPYNLDFDYGALGQLQHFSINNLGDPFIESNYGVHSRQFEVGVLDWFARIWELEKNEYWGYITNCGTEGNLHGILVGREVFPDGILYASRESHYSVFKAARMYRMDCVKVDTLISGEIDCEDFQRKLLLNRDKPAIINVNIGTTVKGAVDDLDLVIKTLEEGGFKDRFYIHCDGALFGLMIPFVKKAPKVSFKKPIGSVSVSGHKFVGCPMPCGVQITRLEHINRLSSNVEYLASRDATIMGSRNGHAPIFLWYTLNRKGYRGFQKEVQKCLRNAHYLKDRLKEAGIGAMLNELSSTVVFERPKDEEFVRRWQLACEGNIAHVVVMPSVTIDKLDYFLNELTEKRATWYQDGSCQPPCLAKDVGEENCLCSIHKK.

The tract at residues E36–R55 is disordered. Substrate is bound at residue H200. K312 carries the post-translational modification N6-(pyridoxal phosphate)lysine.

Belongs to the group II decarboxylase family. Pyridoxal 5'-phosphate serves as cofactor.

The enzyme catalyses L-serine + H(+) = ethanolamine + CO2. Catalyzes the biosynthesis of ethanolamine from serine. Decarboxylation of free serine is the major source of ethanolamine production in plants and ethanolamine metabolism is crucial for the synthesis of choline, phosphatidylethanolamine (PE) and phosphatidylcholine (PC), and thus for plant growth. This chain is Serine decarboxylase 1 (SDC1), found in Oryza sativa subsp. japonica (Rice).